The following is a 159-amino-acid chain: Probable minor fimbrial protein (159 aa).

Residues 1 to 6 (MKKMHG) constitute a propeptide, leader sequence. Phe-7 carries the post-translational modification N-methylphenylalanine. Residues 7 to 29 (FTLIELMIVVAIIGVLASIALMQ) form a helical membrane-spanning segment. Disulfide bonds link Cys-56/Cys-71 and Cys-140/Cys-153.

This sequence belongs to the N-Me-Phe pilin family. In terms of assembly, the pili are polar flexible filaments of about 5.4 nanometers diameter and 2.5 micrometers average length; they consist of only a single polypeptide chain arranged in a helical configuration of five subunits per turn in the assembled pilus.

The protein localises to the fimbrium. The protein resides in the membrane. The polypeptide is Probable minor fimbrial protein (fimZ) (Dichelobacter nodosus (Bacteroides nodosus)).